A 343-amino-acid polypeptide reads, in one-letter code: Phosphate acyltransferase (343 aa).

Belongs to the PlsX family. In terms of assembly, homodimer. Probably interacts with PlsY.

Its subcellular location is the cytoplasm. It carries out the reaction a fatty acyl-[ACP] + phosphate = an acyl phosphate + holo-[ACP]. The protein operates within lipid metabolism; phospholipid metabolism. Its function is as follows. Catalyzes the reversible formation of acyl-phosphate (acyl-PO(4)) from acyl-[acyl-carrier-protein] (acyl-ACP). This enzyme utilizes acyl-ACP as fatty acyl donor, but not acyl-CoA. This chain is Phosphate acyltransferase, found in Coxiella burnetii (strain RSA 331 / Henzerling II).